A 238-amino-acid polypeptide reads, in one-letter code: Ribonuclease PH (238 aa).

Phosphate is bound by residues arginine 86 and 124–126; that span reads GTR.

The protein belongs to the RNase PH family. In terms of assembly, homohexameric ring arranged as a trimer of dimers.

It catalyses the reaction tRNA(n+1) + phosphate = tRNA(n) + a ribonucleoside 5'-diphosphate. Its function is as follows. Phosphorolytic 3'-5' exoribonuclease that plays an important role in tRNA 3'-end maturation. Removes nucleotide residues following the 3'-CCA terminus of tRNAs; can also add nucleotides to the ends of RNA molecules by using nucleoside diphosphates as substrates, but this may not be physiologically important. Probably plays a role in initiation of 16S rRNA degradation (leading to ribosome degradation) during starvation. This is Ribonuclease PH from Chromobacterium violaceum (strain ATCC 12472 / DSM 30191 / JCM 1249 / CCUG 213 / NBRC 12614 / NCIMB 9131 / NCTC 9757 / MK).